The primary structure comprises 1637 residues: Acrosomal protein KIAA1210 (1637 aa).

10 disordered regions span residues 44–121 (RFSS…LSIS), 141–293 (RTTT…KNEW), 341–404 (PTTT…KKKD), 438–759 (VCGE…SQSE), 865–896 (PKLP…EGST), 935–975 (SKYS…FQPL), 1017–1057 (LQPW…IPSQ), 1090–1137 (FPFQ…SRRA), 1182–1238 (SQTI…SKSF), and 1539–1558 (NKGD…PAFS). Positions 103–114 (HRSKSLKIKSQR) are enriched in basic residues. Positions 141–156 (RTTTTFRRRSSQCSST) are enriched in low complexity. The segment covering 170-190 (SESSTQQFSGFSTPATSQGCL) has biased composition (polar residues). The span at 229–249 (AKEKTTTKTKEAEQGEQKVDS) shows a compositional bias: basic and acidic residues. The span at 250–261 (TELSSQEQSSKT) shows a compositional bias: low complexity. Polar residues predominate over residues 341-353 (PTTTEAEVTTVQK). The span at 355 to 374 (PSDKGDVERELADIDVEAQK) shows a compositional bias: basic and acidic residues. A compositionally biased stretch (low complexity) spans 508 to 526 (TGETSSDSKSTSEYESSSE). Over residues 550-572 (ADDEEDGDDEKEEKDNDDDDEEN) the composition is skewed to acidic residues. Residues 689 to 698 (DLSSSEQEQQ) are compositionally biased toward low complexity. Polar residues-rich tracts occupy residues 745–759 (SPTQ…SQSE), 879–896 (GKQS…EGST), 935–956 (SKYS…STSA), 964–975 (SQPSVTPKFQPL), and 1017–1030 (LQPW…QVSV).

As to quaternary structure, interacts with TOP2B. As to expression, predominantly expressed in testis (at protein level).

The protein resides in the cytoplasmic vesicle. It localises to the secretory vesicle. It is found in the acrosome. The sequence is that of Acrosomal protein KIAA1210 from Mus musculus (Mouse).